The following is a 954-amino-acid chain: Endoplasmic reticulum aminopeptidase 2 (954 aa).

At 1–7 (MANSCRK) the chain is on the cytoplasmic side. A helical; Signal-anchor for type II membrane protein membrane pass occupies residues 8–28 (LIFNIYVVFYCSAVIMPQICI). The Lumenal segment spans residues 29 to 954 (CSQFTSSPID…TLRKWLLTSI (926 aa)). N-linked (GlcNAc...) asparagine glycans are attached at residues Asn79 and Asn113. Substrate contacts are provided by residues Glu194 and 328–332 (GAMEN). Residue His364 coordinates Zn(2+). Glu365 functions as the Proton acceptor in the catalytic mechanism. Zn(2+) contacts are provided by His368 and Glu387. A glycan (N-linked (GlcNAc...) asparagine) is linked at Asn399. Residues Cys415 and Cys454 are joined by a disulfide bond. Asn644 is a glycosylation site (N-linked (GlcNAc...) asparagine). A disulfide bond links Cys753 and Cys760.

It belongs to the peptidase M1 family. Heterodimer with ERAP1. Zn(2+) serves as cofactor. N-glycosylated.

Its subcellular location is the endoplasmic reticulum membrane. Aminopeptidase that plays a central role in peptide trimming, a step required for the generation of most HLA class I-binding peptides. Peptide trimming is essential to customize longer precursor peptides to fit them to the correct length required for presentation on MHC class I molecules. Preferentially hydrolyzes the basic residues Arg and Lys. This Bos taurus (Bovine) protein is Endoplasmic reticulum aminopeptidase 2 (ERAP2).